Here is a 91-residue protein sequence, read N- to C-terminus: Small ribosomal subunit protein uS19 (91 aa).

The protein belongs to the universal ribosomal protein uS19 family.

Functionally, protein S19 forms a complex with S13 that binds strongly to the 16S ribosomal RNA. In Paraburkholderia phymatum (strain DSM 17167 / CIP 108236 / LMG 21445 / STM815) (Burkholderia phymatum), this protein is Small ribosomal subunit protein uS19.